We begin with the raw amino-acid sequence, 246 residues long: Glucosamine-6-phosphate deaminase (246 aa).

Asp67 functions as the Proton acceptor; for enolization step in the catalytic mechanism. Residue Asn136 is the For ring-opening step of the active site. The active-site Proton acceptor; for ring-opening step is His138. Catalysis depends on Glu143, which acts as the For ring-opening step.

This sequence belongs to the glucosamine/galactosamine-6-phosphate isomerase family. NagB subfamily.

The catalysed reaction is alpha-D-glucosamine 6-phosphate + H2O = beta-D-fructose 6-phosphate + NH4(+). Its pathway is amino-sugar metabolism; N-acetylneuraminate degradation; D-fructose 6-phosphate from N-acetylneuraminate: step 5/5. In terms of biological role, catalyzes the reversible isomerization-deamination of glucosamine 6-phosphate (GlcN6P) to form fructose 6-phosphate (Fru6P) and ammonium ion. This chain is Glucosamine-6-phosphate deaminase, found in Halalkalibacterium halodurans (strain ATCC BAA-125 / DSM 18197 / FERM 7344 / JCM 9153 / C-125) (Bacillus halodurans).